We begin with the raw amino-acid sequence, 340 residues long: Dihydroorotate dehydrogenase (quinone) (340 aa).

FMN-binding positions include 62 to 66 and threonine 86; that span reads AGLDK. Residue lysine 66 coordinates substrate. 111–115 is a binding site for substrate; it reads NRMGF. FMN-binding residues include asparagine 139 and asparagine 172. Substrate is bound at residue asparagine 172. Catalysis depends on serine 175, which acts as the Nucleophile. Asparagine 177 lines the substrate pocket. Residues lysine 217 and threonine 245 each contribute to the FMN site. 246 to 247 contacts substrate; it reads NT. Residues glycine 268, glycine 297, and 318–319 each bind FMN; that span reads YS.

Belongs to the dihydroorotate dehydrogenase family. Type 2 subfamily. Monomer. FMN serves as cofactor.

The protein resides in the cell membrane. It catalyses the reaction (S)-dihydroorotate + a quinone = orotate + a quinol. The protein operates within pyrimidine metabolism; UMP biosynthesis via de novo pathway; orotate from (S)-dihydroorotate (quinone route): step 1/1. Functionally, catalyzes the conversion of dihydroorotate to orotate with quinone as electron acceptor. This chain is Dihydroorotate dehydrogenase (quinone), found in Alkalilimnicola ehrlichii (strain ATCC BAA-1101 / DSM 17681 / MLHE-1).